The sequence spans 701 residues: Transcriptional regulator Kaiso (701 aa).

One can recognise a BTB domain in the interval 32–94 (CDVTVIVEDR…IYSSKIVRVR (63 aa)). Disordered stretches follow at residues 128 to 158 (GAGGKDGGTDAPSNPDHKAPEPQKSSDSPLP) and 181 to 311 (SSDD…QNQH). The segment covering 245–258 (TPSSQVQLTQNSLP) has biased composition (polar residues). Residues 259–273 (TNQQSSKNTSSTTQK) show a composition bias toward low complexity. Polar residues predominate over residues 278–311 (VNANISKNPTPAANGFLSPTAQKQGTPNAVQNQH). The tract at residues 470-609 (AKLDLDGLPN…QIRQYAYVNN (140 aa)) is required for methylation dependent DNA-binding. 3 C2H2-type zinc fingers span residues 501–523 (YICIVCKRSYVCLTSLRRHFNVH), 529–551 (YPCRYCERVFPLAEYRTKHEIHH), and 557–580 (YQCLTCGSSFINYQVMASHIRSVH). Positions 519–701 (HFNVHSWEKK…EFEFVIPESY (183 aa)) are required for sequence specific DNA-binding. Residues 644–664 (DIDPDEPQQPASEGNHANSAT) are disordered. Over residues 652–664 (QPASEGNHANSAT) the composition is skewed to polar residues.

Self associates. Interacts with tcf7l1-A, leading to repression of tcf7l1-A target genes. Interacts with ctnnd1, and this interaction may inhibit DNA-binding. Interacts with ncor1.

It is found in the nucleus. Functionally, transcriptional regulator with bimodal DNA-binding specificity. Binds to methylated CpG dinucleotides in the consensus sequence 5'-CGCG-3' and also binds to the non-methylated consensus sequence 5'-CTGCNA-3'. May recruit the N-CoR repressor complex to promote histone deacetylation and the formation of repressive chromatin structures in target gene promoters. Contributes to the repression of target genes of the Wnt signaling pathway and to the methylation-dependent repression of zygotic transcription prior to the mid-blastula transition (MBT). Also required for gastrulation movements. The polypeptide is Transcriptional regulator Kaiso (zbtb33) (Xenopus laevis (African clawed frog)).